We begin with the raw amino-acid sequence, 475 residues long: Transcription factor EB (475 aa).

The interval 1 to 52 (MASRIGLRMQLMREQAQQEEQRERMQQQAVMHYMQQQQQQQQQLGGPPTPAI) is disordered. An interaction with ACSS2 region spans residues 1–166 (MASRIGLRMQ…DDVIDNIMRL (166 aa)). Residues 26 to 43 (QQQAVMHYMQQQQQQQQQ) show a composition bias toward low complexity. Residues serine 108, serine 113, serine 121, and serine 137 each carry the phosphoserine modification. Residues 135 to 152 (GNSAPNSPMAMLHISSNP) carry the Nuclear export signal motif. At serine 141 the chain carries Phosphoserine; by MTOR. Positions 155–164 (EFDDVIDNIM) are strong transcription activation domain. Threonine 182 is subject to Phosphothreonine. Phosphoserine; by MTOR is present on serine 210. S-(2,3-dicarboxypropyl)cysteine is present on cysteine 211. The bHLH domain occupies 234–287 (QKKDNHNLIERRRRFNINDRIKELGMLIPKANDLDVRWNKGTILKASVDYIRRM). Residues 244–247 (RRRR) carry the Nuclear localization signal motif. Positions 297–318 (LENHSRRLEMTNKQLWLRIQEL) are leucine-zipper. Phosphoserine is present on serine 331. A disordered region spans residues 351-429 (SEDGPGEALM…HGSPFPNLSK (79 aa)). A compositionally biased stretch (low complexity) spans 380–389 (LPSAAQPQSP). Phosphoserine is present on residues serine 422, serine 440, serine 465, serine 466, and serine 468. The span at 445–468 (ASDPLFSTMSPEASKASSRRSSFS) shows a compositional bias: low complexity. The interval 445–475 (ASDPLFSTMSPEASKASSRRSSFSMEEGDVL) is disordered.

Belongs to the MiT/TFE family. As to quaternary structure, homodimer and heterodimer; with TFE3 or MITF. Interacts (when phosphorylated by MTOR) with YWHAZ; promoting retention in the cytosol. Interacts with Irgm1; promoting association between TFEB and PPP3CB and dephosphorylation. Interacts with small GTPases Rag (RagA/RRAGA, RagB/RRAGB, RagC/RRAGC and/or RagD/RRAGD); promoting its recruitment to lysosomal membrane in the presence of nutrients. Interacts with ACSS2. Post-translationally, phosphorylation at Ser-210 by MTOR via non-canonical mTORC1 pathway regulates its subcellular location and activity. When nutrients are present, phosphorylation by MTOR promotes association with 14-3-3/YWHA adapters and retention in the cytosol. Inhibition of mTORC1, starvation and lysosomal disruption, promotes dephosphorylation by calcineurin PPP3CB and translocation to the nucleus. Dephosphorylated by calcineurin PPP3CB in response to lysosomal Ca(2+) release. Irgm1 promotes dephosphorylation by calcineurin PPP3CB, resulting in TFEB nuclear translocation and stimulation of lysosomal biogenesis. Exported from the nucleus in a mTORC1-dependent manner in response to nutrient availability. Alkylated via a non-enzymatic covalent modification. Itaconate, an anti-inflammatory metabolite generated in response to lipopolysaccharide, alkylates Cys-211, preventing association with 14-3-3/YWHA adapters, thereby promoting nuclear translocation and activity. In terms of processing, sumoylated; does not affect dimerization with MITF. As to expression, widely expressed.

Its subcellular location is the nucleus. It is found in the cytoplasm. The protein localises to the cytosol. The protein resides in the lysosome membrane. Its function is as follows. Transcription factor that acts as a master regulator of lysosomal biogenesis, autophagy, lysosomal exocytosis, lipid catabolism, energy metabolism and immune response. Specifically recognizes and binds E-box sequences (5'-CANNTG-3'); efficient DNA-binding requires dimerization with itself or with another MiT/TFE family member such as TFE3 or MITF. Involved in the cellular response to amino acid availability by acting downstream of MTOR: in the presence of nutrients, TFEB phosphorylation by MTOR promotes its cytosolic retention and subsequent inactivation. Upon starvation or lysosomal stress, inhibition of MTOR induces TFEB dephosphorylation, resulting in nuclear localization and transcription factor activity. Specifically recognizes and binds the CLEAR-box sequence (5'-GTCACGTGAC-3') present in the regulatory region of many lysosomal genes, leading to activate their expression, thereby playing a central role in expression of lysosomal genes. Regulates lysosomal positioning in response to nutrient deprivation by promoting the expression of PIP4P1. Acts as a positive regulator of autophagy by promoting expression of genes involved in autophagy. In association with TFE3, activates the expression of CD40L in T-cells, thereby playing a role in T-cell-dependent antibody responses in activated CD4(+) T-cells and thymus-dependent humoral immunity. Specifically recognizes the gamma-E3 box, a subset of E-boxes, present in the heavy-chain immunoglobulin enhancer. Plays a role in the signal transduction processes required for normal vascularization of the placenta. Involved in the immune response to infection by the bacteria S.aureus, S.typhimurium or S.enterica. Infection promotes itaconate production, leading to alkylation, resulting in nuclear localization and transcription factor activity. Itaconate-mediated alkylation activates TFEB-dependent lysosomal biogenesis, facilitating the bacteria clearance during the antibacterial innate immune response. In association with ACSS2, promotes the expression of genes involved in lysosome biogenesis and both autophagy upon glucose deprivation. The polypeptide is Transcription factor EB (Mus musculus (Mouse)).